The primary structure comprises 101 residues: MELKQIATAGTMESSDIMITLSPNKTGLEIKLQSNVEKQFGQQIRTMIESVLKQFEITNVTVDAVDKGALDCTIKARTIVAVYRGLGKEDYDWEEINKWIA.

Residue serine 14 is modified to O-(phosphoribosyl dephospho-coenzyme A)serine.

It belongs to the CitD family. Oligomer with a subunit composition of (alpha,beta,gamma)6.

The protein resides in the cytoplasm. In terms of biological role, covalent carrier of the coenzyme of citrate lyase. This is Citrate lyase acyl carrier protein from Latilactobacillus sakei subsp. sakei (strain 23K) (Lactobacillus sakei subsp. sakei).